We begin with the raw amino-acid sequence, 353 residues long: Fasciclin-like arabinogalactan protein 21 (353 aa).

An N-terminal signal peptide occupies residues 1–28 (MGCCSSDCFVYFILSIALAFMAISTTLR). N-linked (GlcNAc...) asparagine glycans are attached at residues Asn-51, Asn-81, Asn-94, Asn-200, Asn-249, and Asn-315. The FAS1 1 domain occupies 83-181 (TLFAIEDASF…HGVIGPFSPL (99 aa)). The FAS1 2 domain occupies 254 to 352 (TILATPNLVS…GISHTLEIPH (99 aa)).

The protein belongs to the fasciclin-like AGP family.

It localises to the secreted. Functionally, may be a cell surface adhesion protein. In Arabidopsis thaliana (Mouse-ear cress), this protein is Fasciclin-like arabinogalactan protein 21 (FLA21).